A 669-amino-acid chain; its full sequence is Diacylglycerol lipase-beta (669 aa).

Over 1–17 (MPGMVLFGRRWSLASDD) the chain is Cytoplasmic. The helical transmembrane segment at 18–38 (LVFPGSFELFLRVLWWIVSLT) threads the bilayer. The Extracellular portion of the chain corresponds to 39–58 (LYLTHRRRLDCPGGVLLSTY). A helical transmembrane segment spans residues 59–79 (LIVLLVLLAVIICTVLAIVCV). Over 80–102 (SMRGTICNPGPRKSMSKLLYIRL) the chain is Cytoplasmic. Residues 103 to 123 (ALFLPEMVWASLGAAWVAKGI) form a helical membrane-spanning segment. Over 124–128 (QCDRT) the chain is Extracellular. A helical membrane pass occupies residues 129–149 (VVIGIIATVIVSWIVIAATMV). The Cytoplasmic portion of the chain corresponds to 150 to 669 (TIIFVFDPLG…CPGQGGSSVP (520 aa)). Active-site charge relay system residues include serine 443 and aspartate 495. Phosphoserine is present on residues serine 570, serine 578, and serine 582.

It belongs to the AB hydrolase superfamily. Lipase family. Ca(2+) is required as a cofactor. Expressed in liver and immune cells such as macrophages and microglias. In embryonic brains present in axonal tracts, while in adults localizes to dendritic fields, correlating with the developmental change in requirement for 2-AG synthesis from the pre- to the postsynaptic compartment (at protein level).

The protein resides in the cell membrane. The catalysed reaction is a 1,2-diacyl-sn-glycerol + H2O = a 2-acylglycerol + a fatty acid + H(+). It catalyses the reaction 1-octadecanoyl-2-(5Z,8Z,11Z,14Z-eicosatetraenoyl)-sn-glycerol + H2O = 2-(5Z,8Z,11Z,14Z-eicosatetraenoyl)-glycerol + octadecanoate + H(+). It carries out the reaction 1,2-di-(9Z-octadecenoyl)-sn-glycerol + H2O = 2-(9Z-octadecenoyl)-glycerol + (9Z)-octadecenoate + H(+). The enzyme catalyses 1-(9Z-octadecenoyl)-2-(5Z,8Z,11Z,14Z-eicosatetraenoyl)-sn-glycerol + H2O = 2-(5Z,8Z,11Z,14Z-eicosatetraenoyl)-glycerol + (9Z)-octadecenoate + H(+). The catalysed reaction is 1-(9Z-octadecenoyl)-2-octadecanoyl-sn-glycerol + H2O = 2-octadecanoylglycerol + (9Z)-octadecenoate + H(+). It catalyses the reaction 1-(9Z-octadecenoyl)-2-(9Z,12Z-octadecadienoyl)-sn-glycerol + H2O = 2-(9Z,12Z-octadecadienoyl)-glycerol + (9Z)-octadecenoate + H(+). It carries out the reaction 1-(9Z-octadecenoyl)-2-O-(5Z,8Z,11Z,14Z-eicosatetraenyl)-sn-glycerol + H2O = 2-O-(5Z,8Z,11Z,14Z)-eicosatetraenylglycerol + (9Z)-octadecenoate + H(+). The enzyme catalyses a triacylglycerol + H2O = a diacylglycerol + a fatty acid + H(+). The catalysed reaction is 1,2,3-tri-(5Z,8Z,11Z,14Z-eicosatetraenoyl)-glycerol + H2O = 1,2-di-(5Z,8Z,11Z,14Z-eicosatetraenoyl)-glycerol + (5Z,8Z,11Z,14Z)-eicosatetraenoate + H(+). It catalyses the reaction 1,2,3-(4Z,7Z,10Z,13Z,16Z,19Z-docosahexaenoyl)-glycerol + H2O = 1,2-di-(4Z,7Z,10Z,13Z,16Z,19Z-docosahexaenoyl)-glycerol + (4Z,7Z,10Z,13Z,16Z,19Z)-docosahexaenoate + H(+). Its activity is regulated as follows. Inhibited by the 1,2,3-triazole urea covalent inhibitors KT109 and KT172. Inhibited by p-hydroxy-mercuri-benzoate and HgCl(2), but not by PMSF. Also inhibited by RHC80267, a drug that blocks 2-AG formation. In terms of biological role, lipase that catalyzes the hydrolysis of arachidonic acid (AA)-esterified diacylglycerols (DAGs) to produce the principal endocannabinoid, 2-arachidonoylglycerol (2-AG) which can be further cleaved by downstream enzymes to release arachidonic acid (AA) for cyclooxygenase (COX)-mediated eicosanoid production. Preferentially hydrolyzes DAGs at the sn-1 position in a calcium-dependent manner and has negligible activity against other lipids including monoacylglycerols and phospholipids. Plays a key role in the regulation of 2-AG and AA pools utilized by COX1/2 to generate lipid mediators of macrophage and microglia inflammatory responses. Also functions as a polyunsaturated fatty acids-specific triacylglycerol lipase in macrophages. Plays an important role to support the metabolic and signaling demands of macrophages. In Mus musculus (Mouse), this protein is Diacylglycerol lipase-beta (Daglb).